The following is a 77-amino-acid chain: Large ribosomal subunit protein uL24 (77 aa).

The segment at lysine 42–glycine 61 is disordered.

It belongs to the universal ribosomal protein uL24 family. As to quaternary structure, part of the 50S ribosomal subunit.

Its function is as follows. One of two assembly initiator proteins, it binds directly to the 5'-end of the 23S rRNA, where it nucleates assembly of the 50S subunit. In terms of biological role, one of the proteins that surrounds the polypeptide exit tunnel on the outside of the subunit. This Lactobacillus helveticus (strain DPC 4571) protein is Large ribosomal subunit protein uL24.